Here is a 330-residue protein sequence, read N- to C-terminus: ADP-L-glycero-D-manno-heptose-6-epimerase (330 aa).

NADP(+) is bound by residues 11–12 (FI), 32–33 (DN), lysine 39, lysine 54, 75–79 (EGACS), and asparagine 92. The active-site Proton acceptor is tyrosine 139. Residue lysine 143 participates in NADP(+) binding. Asparagine 168 serves as a coordination point for substrate. NADP(+)-binding residues include valine 169 and lysine 177. Lysine 177 (proton acceptor) is an active-site residue. Residues arginine 179, histidine 186, 200 to 203 (FGEY), arginine 213, and tyrosine 292 each bind substrate.

It belongs to the NAD(P)-dependent epimerase/dehydratase family. HldD subfamily. In terms of assembly, homopentamer. NADP(+) serves as cofactor.

The enzyme catalyses ADP-D-glycero-beta-D-manno-heptose = ADP-L-glycero-beta-D-manno-heptose. It functions in the pathway nucleotide-sugar biosynthesis; ADP-L-glycero-beta-D-manno-heptose biosynthesis; ADP-L-glycero-beta-D-manno-heptose from D-glycero-beta-D-manno-heptose 7-phosphate: step 4/4. Its function is as follows. Catalyzes the interconversion between ADP-D-glycero-beta-D-manno-heptose and ADP-L-glycero-beta-D-manno-heptose via an epimerization at carbon 6 of the heptose. The sequence is that of ADP-L-glycero-D-manno-heptose-6-epimerase from Burkholderia cenocepacia (strain ATCC BAA-245 / DSM 16553 / LMG 16656 / NCTC 13227 / J2315 / CF5610) (Burkholderia cepacia (strain J2315)).